The chain runs to 390 residues: GTPase Obg (390 aa).

An Obg domain is found at 1–159 (MKFVDEASIL…RDLLLELMLL (159 aa)). Positions 127–147 (NTRFKSSVNRTPRQKTNGTPG) are disordered. Polar residues predominate over residues 129–145 (RFKSSVNRTPRQKTNGT). The region spanning 160–333 (ADVGMLGMPN…LCWDVMTFII (174 aa)) is the OBG-type G domain. GTP is bound by residues 166–173 (GMPNAGKS), 191–195 (FTTLV), 213–216 (DIPG), 283–286 (NKID), and 314–316 (SAA). Mg(2+) is bound by residues Ser173 and Thr193.

This sequence belongs to the TRAFAC class OBG-HflX-like GTPase superfamily. OBG GTPase family. In terms of assembly, monomer. The cofactor is Mg(2+).

The protein localises to the cytoplasm. Its function is as follows. An essential GTPase which binds GTP, GDP and possibly (p)ppGpp with moderate affinity, with high nucleotide exchange rates and a fairly low GTP hydrolysis rate. Plays a role in control of the cell cycle, stress response, ribosome biogenesis and in those bacteria that undergo differentiation, in morphogenesis control. The chain is GTPase Obg from Salmonella paratyphi A (strain ATCC 9150 / SARB42).